The following is a 264-amino-acid chain: Protein-lysine methyltransferase METTL21C (264 aa).

Residues 1–10 (MDVCLSSAQQ) show a composition bias toward polar residues. The tract at residues 1 to 46 (MDVCLSSAQQPGRRGEGLSSPGGWLEAEKKGAPQKDSTGGVLEESN) is disordered. Residues tryptophan 92, 120 to 122 (GAG), aspartate 141, tryptophan 172, and serine 193 contribute to the S-adenosyl-L-methionine site.

It belongs to the methyltransferase superfamily. METTL21 family. As to quaternary structure, interacts with members of the heat shock protein 70 families; these proteins may possibly be methylation substrates for the enzyme.

The protein localises to the nucleus. Its subcellular location is the cytoplasm. The enzyme catalyses L-lysyl-[protein] + S-adenosyl-L-methionine = N(6)-methyl-L-lysyl-[protein] + S-adenosyl-L-homocysteine + H(+). It catalyses the reaction N(6)-methyl-L-lysyl-[protein] + S-adenosyl-L-methionine = N(6),N(6)-dimethyl-L-lysyl-[protein] + S-adenosyl-L-homocysteine + H(+). It carries out the reaction N(6),N(6)-dimethyl-L-lysyl-[protein] + S-adenosyl-L-methionine = N(6),N(6),N(6)-trimethyl-L-lysyl-[protein] + S-adenosyl-L-homocysteine + H(+). Its function is as follows. Protein-lysine N-methyltransferase using S-adenosyl-L-methionine as methyl donor. Mono-di and trimethylates 'Lys-943' of AARS1. The chain is Protein-lysine methyltransferase METTL21C from Homo sapiens (Human).